The following is a 190-amino-acid chain: Dynein axonemal light chain 1 (190 aa).

LRR repeat units follow at residues 49–70, 71–92, 94–115, and 116–137; these read VCEK…NGLK, NLKI…EAVG, SLEE…HVLK, and KLKV…NKLQ. One can recognise an LRRCT domain in the interval 150–190; the sequence is NPLEEKHSAEGDWQDRVTKSLKALKKLDGTPIIKNDEEEED.

The protein belongs to the dynein light chain LC1-type family. Interacts with DNAH5, a outer arm dynein heavy chain. Interacts with tubulin located within the A-tubule of the outer doublets in a ATP-independent manner.

It localises to the cytoplasm. The protein resides in the cytoskeleton. It is found in the cilium axoneme. Its function is as follows. Part of the multisubunit axonemal ATPase complexes that generate the force for cilia motility and govern beat frequency. Component of the outer arm dynein (ODA). May be involved in a mechanosensory feedback mechanism controlling ODA activity based on external conformational cues by tethering the outer arm dynein heavy chain (DNAH5) to the microtubule within the axoneme. The sequence is that of Dynein axonemal light chain 1 (DNAL1) from Ciona intestinalis (Transparent sea squirt).